The sequence spans 491 residues: Glutamyl-tRNA(Gln) amidotransferase subunit A (491 aa).

Catalysis depends on charge relay system residues K76 and S154. The active-site Acyl-ester intermediate is S178.

This sequence belongs to the amidase family. GatA subfamily. Heterotrimer of A, B and C subunits.

It catalyses the reaction L-glutamyl-tRNA(Gln) + L-glutamine + ATP + H2O = L-glutaminyl-tRNA(Gln) + L-glutamate + ADP + phosphate + H(+). Allows the formation of correctly charged Gln-tRNA(Gln) through the transamidation of misacylated Glu-tRNA(Gln) in organisms which lack glutaminyl-tRNA synthetase. The reaction takes place in the presence of glutamine and ATP through an activated gamma-phospho-Glu-tRNA(Gln). The polypeptide is Glutamyl-tRNA(Gln) amidotransferase subunit A (Cereibacter sphaeroides (strain ATCC 17025 / ATH 2.4.3) (Rhodobacter sphaeroides)).